The sequence spans 2351 residues: Coagulation factor VIII (2351 aa).

Residues 1–19 (MQIELSTCFFLCLLRFCFS) form the signal peptide. 2 Plastocyanin-like domains span residues 20–198 (ATRR…LLVC) and 206–348 (EKTQ…VDSC). In terms of domain architecture, F5/8 type A 1 spans 20–348 (ATRRYYLGAV…MEAYVKVDSC (329 aa)). Asn60 is a glycosylation site (N-linked (GlcNAc...) asparagine). A disulfide bond links Cys172 and Cys198. Asn258 carries an N-linked (GlcNAc...) asparagine glycan. A disulfide bridge links Cys267 with Cys348. Tyr365 carries the post-translational modification Sulfotyrosine. 2 Plastocyanin-like domains span residues 399–573 (KTWV…LLIC) and 583–730 (NQIM…VSSC). Residues 399-730 (KTWVHYIAAE…MTALLKVSSC (332 aa)) enclose the F5/8 type A 2 domain. Cysteines 547 and 573 form a disulfide. The N-linked (GlcNAc...) asparagine glycan is linked to Asn601. A disulfide bond links Cys649 and Cys730. Sulfotyrosine occurs at positions 737, 738, and 742. The tract at residues 760–1667 (SFSQNSRHPS…NPPVLKRHQR (908 aa)) is b. N-linked (GlcNAc...) asparagine glycosylation is found at Asn776, Asn803, Asn847, and Asn919. Disordered regions lie at residues 906-928 (STIPSDNLAAGTDNTSSLGPPSM) and 941-961 (FGKKSSPLTESGGPLSLSEEN). Asn962, Asn982, Asn1020, Asn1024, Asn1074, Asn1085, Asn1204, Asn1274, Asn1278, Asn1301, Asn1319, Asn1431, and Asn1461 each carry an N-linked (GlcNAc...) asparagine glycan. A sulfotyrosine mark is found at Tyr1683 and Tyr1699. 2 Plastocyanin-like domains span residues 1713–1877 (KTRH…LLVC) and 1887–2040 (GRQV…SNKC). The F5/8 type A 3 domain occupies 1713–2040 (KTRHYFIAAV…TLFLVYSNKC (328 aa)). Residue Asn1829 is glycosylated (N-linked (GlcNAc...) asparagine). Cystine bridges form between Cys1851/Cys1877, Cys1918/Cys1922, Cys2040/Cys2188, and Cys2193/Cys2345. F5/8 type C domains are found at residues 2040–2188 (CQTP…LMGC) and 2193–2345 (CSMP…VLGC). Residue Asn2137 is glycosylated (N-linked (GlcNAc...) asparagine).

The protein belongs to the multicopper oxidase family. In terms of assembly, interacts with VWF/vWF. vWF binding is essential for the stabilization of F8 in circulation. In terms of processing, sulfation on Tyr-1699 is essential for binding vWF. Post-translationally, proteolytically cleaved by cathepsin CTSG to produce a partially activated form.

The protein resides in the secreted. The protein localises to the extracellular space. Its function is as follows. Factor VIII, along with calcium and phospholipid, acts as a cofactor for F9/factor IXa when it converts F10/factor X to the activated form, factor Xa. In Homo sapiens (Human), this protein is Coagulation factor VIII (F8).